Reading from the N-terminus, the 371-residue chain is 4-hydroxyphenylpyruvate dioxygenase-like protein (371 aa).

2 VOC domains span residues 7–135 (RLCH…LLQR) and 160–328 (HVDH…VFTK). The Fe cation site is built by H163, H258, and E339.

It belongs to the 4HPPD family. Requires Fe cation as cofactor.

It is found in the mitochondrion. It catalyses the reaction 3-(4-hydroxyphenyl)pyruvate + O2 = (S)-4-hydroxymandelate + CO2. Iron-dependent dioxygenase that catalyzes the conversion of 4-hydroxyphenylpyruvate (4-HPPA) to 4-hydroxymandelate (4-HMA) in the mitochondria, one of the steps in the biosynthesis of coenzyme Q10 from tyrosine. The protein is 4-hydroxyphenylpyruvate dioxygenase-like protein of Mus musculus (Mouse).